Here is a 704-residue protein sequence, read N- to C-terminus: Acetyl-coenzyme A synthetase 1 (704 aa).

CoA contacts are provided by residues 239 to 242 and threonine 358; that span reads RGGK. Residues 434–436, 458–463, aspartate 550, and arginine 565 contribute to the ATP site; these read GEP and DTYWQT. Serine 573 is a binding site for CoA. An ATP-binding site is contributed by arginine 576. Arginine 641 contributes to the CoA binding site. A Microbody targeting signal motif is present at residues 702–704; that stretch reads VKL.

This sequence belongs to the ATP-dependent AMP-binding enzyme family.

The protein resides in the microsome. It localises to the endoplasmic reticulum. The enzyme catalyses acetate + ATP + CoA = acetyl-CoA + AMP + diphosphate. In Candida glabrata (strain ATCC 2001 / BCRC 20586 / JCM 3761 / NBRC 0622 / NRRL Y-65 / CBS 138) (Yeast), this protein is Acetyl-coenzyme A synthetase 1 (ACS1).